A 233-amino-acid chain; its full sequence is DNA-directed RNA polymerase I subunit RPA34 (233 aa).

Ser-10, Ser-12, Ser-14, and Ser-60 each carry phosphoserine. A compositionally biased stretch (basic and acidic residues) spans 179-191; the sequence is DFHVAEEVKENKK. The disordered stretch occupies residues 179–233; that stretch reads DFHVAEEVKENKKEPKKRSHHDDEEESSEKKKKKKEKREKREKKDKKDKKKKHRD. A compositionally biased stretch (basic residues) spans 208–233; it reads KKKKKKEKREKREKKDKKDKKKKHRD.

This sequence belongs to the eukaryotic RPA34 RNA polymerase subunit family. In terms of assembly, component of the RNA polymerase I (Pol I) complex consisting of 14 subunits: RPA135, RPA190, RPC40, RPA14, RPB5, RPO26, RPA43, RPB8, RPA12, RPB10, RPC19, RPC10, RPA49 and RPA34. The complex is composed of a horseshoe-shaped core containing ten subunits (RPA135, RPA190, RPB5, RPO26, RPB8, RPB10, RPC10, RPA12, RPC19 and RPC40) where RPA135 and RPA190 form the DNA-binding cleft. Outside of the core, RPA14 and RPA43 form the stalk that mediates interactions with transcription initiation factors and newly synthesized RNA. Forms a TFIIF-like heterodimer with RPA49; the heterodimer formed by RPA34 and RPA49 can be dissociated from the Pol I core giving rise to a 12 subunit form A* of Pol I (formerly called pol A) that shows impaired transcript elongation activity and increased sensitivity to alpha-amanitin. The heterodimer formed by RPA34 and RPA49 stabilizes subunit RPA12 and stimulates RPA12-dependent RNA cleavage.

The protein resides in the nucleus. Its subcellular location is the nucleolus. Its function is as follows. DNA-dependent RNA polymerases catalyze the transcription of DNA into RNA using the four ribonucleoside triphosphates as substrates. Component of RNA polymerase I (Pol I) which synthesizes ribosomal RNA precursors. Besides, RNA polymerase I has intrinsic RNA cleavage activity. The heterodimer formed by RPA34 and RPA49 stimulates transcript elongation by Pol I. The chain is DNA-directed RNA polymerase I subunit RPA34 (RPA34) from Saccharomyces cerevisiae (strain ATCC 204508 / S288c) (Baker's yeast).